Here is an 83-residue protein sequence, read N- to C-terminus: UPF0297 protein LEUM_0557 (83 aa).

The protein belongs to the UPF0297 family.

This Leuconostoc mesenteroides subsp. mesenteroides (strain ATCC 8293 / DSM 20343 / BCRC 11652 / CCM 1803 / JCM 6124 / NCDO 523 / NBRC 100496 / NCIMB 8023 / NCTC 12954 / NRRL B-1118 / 37Y) protein is UPF0297 protein LEUM_0557.